The following is a 437-amino-acid chain: Trigger factor (437 aa).

A PPIase FKBP-type domain is found at 161-246 (DDQVNIDFVG…VNSVSAPVLP (86 aa)).

This sequence belongs to the FKBP-type PPIase family. Tig subfamily.

The protein localises to the cytoplasm. It catalyses the reaction [protein]-peptidylproline (omega=180) = [protein]-peptidylproline (omega=0). Functionally, involved in protein export. Acts as a chaperone by maintaining the newly synthesized protein in an open conformation. Functions as a peptidyl-prolyl cis-trans isomerase. The polypeptide is Trigger factor (Pseudomonas putida (strain ATCC 700007 / DSM 6899 / JCM 31910 / BCRC 17059 / LMG 24140 / F1)).